Consider the following 443-residue polypeptide: KH domain-containing, RNA-binding, signal transduction-associated protein 1 (443 aa).

The tract at residues 1–95 (MQRRDDPAAR…LLPPSATAAA (95 aa)) is disordered. 2 positions are modified to phosphoserine: Ser18 and Ser20. Lys21 carries the post-translational modification N6-acetyllysine. Ser29 is modified (phosphoserine). A Phosphothreonine modification is found at Thr33. Asymmetric dimethylarginine; by PRMT1 occurs at positions 45 and 52. At Ser58 the chain carries Phosphoserine. Positions 61 to 72 (TQPPPLLPPSNP) are enriched in pro residues. A compositionally biased stretch (low complexity) spans 81–95 (SAPTPLLPPSATAAA). Thr84 is subject to Phosphothreonine; by MAPK1. Glycyl lysine isopeptide (Lys-Gly) (interchain with G-Cter in SUMO2) cross-links involve residues Lys96 and Lys102. An involved in homodimerization region spans residues 100 to 260 (ENKYLPELMA…VKKFLVPDMM (161 aa)). Residue Ser113 is modified to Phosphoserine. Lys139 participates in a covalent cross-link: Glycyl lysine isopeptide (Lys-Gly) (interchain with G-Cter in SUMO2). Ser150 is subject to Phosphoserine. The region spanning 171–197 (NFVGKILGPQGNTIKRLQEETGAKISV) is the KH domain. Lys175 carries the post-translational modification N6-acetyllysine; alternate. A Glycyl lysine isopeptide (Lys-Gly) (interchain with G-Cter in SUMO2); alternate cross-link involves residue Lys175. Thr183 is subject to Phosphothreonine. The interval 280-317 (PSRGRGVSVRGRGAAPPPPPVPRGRGVGPPRGALVRGT) is disordered. Omega-N-methylarginine occurs at positions 282, 284, and 291. The segment covering 283–293 (GRGVSVRGRGA) has biased composition (low complexity). Asymmetric dimethylarginine; by PRMT1 is present on Arg304. The span at 307-316 (GPPRGALVRG) shows a compositional bias: low complexity. Arg310 and Arg315 each carry omega-N-methylarginine; by PRMT1. The residue at position 320 (Arg320) is a Dimethylated arginine; alternate. The residue at position 320 (Arg320) is an Omega-N-methylarginine; by PRMT1; alternate. The residue at position 325 (Arg325) is an Omega-N-methylarginine; by PRMT1. Positions 326–345 (GATVTRGVPPPPTVRGAPTP) are disordered. A dimethylated arginine; alternate mark is found at Arg331 and Arg340. 2 positions are modified to omega-N-methylarginine; by PRMT1; alternate: Arg331 and Arg340. Residue Arg331 is modified to Asymmetric dimethylarginine; alternate. Positions 351-443 (GIQRIPLPPT…AYREHPYGRY (93 aa)) are interaction with HNRNPA1. At Tyr387 the chain carries Phosphotyrosine. Phosphoserine is present on Ser390. The interval 400-420 (GHGELQDSYEAYGQDDWNGTR) is interaction with ZBTB7A. The tract at residues 411–443 (YGQDDWNGTRPSLKAPPARPVKGAYREHPYGRY) is disordered. A Glycyl lysine isopeptide (Lys-Gly) (interchain with G-Cter in SUMO2) cross-link involves residue Lys432. Basic and acidic residues predominate over residues 434–443 (AYREHPYGRY). A phosphotyrosine; by PTK6 mark is found at Tyr435, Tyr440, and Tyr443.

Belongs to the KHDRBS family. In terms of assembly, self-associates to form homooligomers when bound to RNA, oligomerization appears to be limited when binding to proteins. Interacts with KHDRBS3/SLIM-2. Forms a trimeric complex in the nucleus consisting of BANP, HDAC6 and KHDRBS1/SAM68; HDAC6 keeps KHDRBS1 in a deacetylated state which inhibits the inclusion of CD44 alternate exons. The complex is disrupted by MAPK1/MAPK3-mediated phosphorylation of BANP which results in BANP export to the cytoplasm. This facilitates acetylation of KHDRBS1 and CD44 variant exon inclusion. Interacts with KHDRBS2/SLIM-1; heterooligomer formation of KHDRBS family proteins may modulate RNA substrate specificity. Interacts with PIK3R1, PLCG1. Interacts with RASA1, GRB2, SRC, CBP, PRMT1, APC, HNRNPA1. Interacts with PTK6 (via SH3 and SH2 domains). Forms a complex with ILF2, ILF3, YLPM1, RBMX, NCOA5 and PPP1CA. Binds WBP4/FBP21 (via WW domains), FNBP4/FBP30 (via WW domains). Interacts (via Arg/Gly-rich-flanked Pro-rich regions) with FYN (via the SH3 domain). Interacts with the non-receptor tyrosine kinase SRMS; the interaction leads to phosphorylation of KHDRBS1. Interacts with ZBTB7A; negatively regulates KHDRBS1 splicing activity toward BCL2L1. Post-translationally, tyrosine phosphorylated by several non-receptor tyrosine kinases including LCK, FYN and JAK3. Also tyrosine phosphorylated by the non-receptor tyrosine kinase SRMS in an EGF-dependent manner. Phosphorylation by PTK6 negatively regulates its RNA binding ability. Phosphorylation by PTK6 at Tyr-440 dictates the nuclear localization of KHDRBS1. In terms of processing, acetylated. Positively correlates with ability to bind RNA. Deacetylated by HDAC6; this regulates alternative splicing by inhibiting the inclusion of CD44 alternate exons. Arginine methylation is required for nuclear localization, Inhibits interaction with Src-like SH3 domains, but not interaction with WW domains of WBP4/FBP21 and FNBP4/FBP30.

The protein resides in the nucleus. It localises to the cytoplasm. Its subcellular location is the membrane. Functionally, recruited and tyrosine phosphorylated by several receptor systems, for example the T-cell, leptin and insulin receptors. Once phosphorylated, functions as an adapter protein in signal transduction cascades by binding to SH2 and SH3 domain-containing proteins. Role in G2-M progression in the cell cycle. Represses CBP-dependent transcriptional activation apparently by competing with other nuclear factors for binding to CBP. Also acts as a putative regulator of mRNA stability and/or translation rates and mediates mRNA nuclear export. Positively regulates the association of constitutive transport element (CTE)-containing mRNA with large polyribosomes and translation initiation. May not be involved in the nucleocytoplasmic export of unspliced (CTE)-containing RNA species. RNA-binding protein that plays a role in the regulation of alternative splicing and influences mRNA splice site selection and exon inclusion. Binds to RNA containing 5'-[AU]UAA-3' as a bipartite motif spaced by more than 15 nucleotides. Binds poly(A). Can regulate CD44 alternative splicing in a Ras pathway-dependent manner. In cooperation with HNRNPA1 modulates alternative splicing of BCL2L1 by promoting splicing toward isoform Bcl-X(S), and of SMN1. Can regulate alternative splicing of NRXN1 and NRXN3 in the laminin G-like domain 6 containing the evolutionary conserved neurexin alternative spliced segment 4 (AS4) involved in neurexin selective targeting to postsynaptic partners. In a neuronal activity-dependent manner cooperates synergistically with KHDRBS2/SLIM-1 in regulation of NRXN1 exon skipping at AS4. The cooperation with KHDRBS2/SLIM-1 is antagonistic for regulation of NXRN3 alternative splicing at AS4. The chain is KH domain-containing, RNA-binding, signal transduction-associated protein 1 from Rattus norvegicus (Rat).